Reading from the N-terminus, the 332-residue chain is CMRF35-like molecule 1 (332 aa).

A signal peptide spans 1-18; that stretch reads MHLSLLALFLFWISGCFT. At 19–181 the chain is on the extracellular side; the sequence is AQDPVTGPEE…GDGNGFLDLS (163 aa). The Ig-like V-type domain occupies 22 to 125; sequence PVTGPEEVSG…YDHMFKVHVS (104 aa). Intrachain disulfides connect Cys41/Cys109 and Cys55/Cys63. An N-linked (GlcNAc...) asparagine glycan is attached at Asn89. The chain crosses the membrane as a helical span at residues 182-202; sequence VLLPVISAALLLLLLVVSLIA. The Cytoplasmic segment spans residues 203–332; that stretch reads WRMVRRQKKA…EYSSIRRPMP (130 aa). 2 disordered regions span residues 251-270 and 313-332; these read PRTS…KDHQ and PRTN…RPMP.

Belongs to the CD300 family. As to quaternary structure, interacts with PTPN6/SHP-1 in a tyrosine phosphorylation dependent manner. Interacts with IL4R. Phosphorylated on tyrosine.

It is found in the cell membrane. Its function is as follows. Acts as an inhibitory receptor for myeloid cells and mast cells. Positively regulates the phagocytosis of apoptotic cells (efferocytosis) via phosphatidylserine (PS) recognition; recognizes and binds PS as a ligand which is expressed on the surface of apoptotic cells. Plays an important role in the maintenance of immune homeostasis, by promoting macrophage-mediated efferocytosis and by inhibiting dendritic cell-mediated efferocytosis. Negatively regulates Fc epsilon receptor-dependent mast cell activation and allergic responses via binding to ceramide and sphingomyelin which act as ligands. May act as a coreceptor for interleukin 4 (IL-4). Associates with and regulates IL-4 receptor alpha-mediated responses by augmenting IL-4- and IL-13-induced signaling. Negatively regulates the Toll-like receptor (TLR) signaling mediated by MYD88 and TRIF through activation of PTPN6/SHP-1 and PTPN11/SHP-2. Inhibits osteoclast formation. Induces macrophage cell death upon engagement. This chain is CMRF35-like molecule 1 (Cd300lf), found in Rattus norvegicus (Rat).